A 236-amino-acid chain; its full sequence is Ubiquinone biosynthesis O-methyltransferase (236 aa).

S-adenosyl-L-methionine contacts are provided by Arg-36, Gly-60, Asp-81, and Leu-123.

It belongs to the methyltransferase superfamily. UbiG/COQ3 family.

The catalysed reaction is a 3-demethylubiquinol + S-adenosyl-L-methionine = a ubiquinol + S-adenosyl-L-homocysteine + H(+). It carries out the reaction a 3-(all-trans-polyprenyl)benzene-1,2-diol + S-adenosyl-L-methionine = a 2-methoxy-6-(all-trans-polyprenyl)phenol + S-adenosyl-L-homocysteine + H(+). It participates in cofactor biosynthesis; ubiquinone biosynthesis. Its function is as follows. O-methyltransferase that catalyzes the 2 O-methylation steps in the ubiquinone biosynthetic pathway. This chain is Ubiquinone biosynthesis O-methyltransferase, found in Rickettsia canadensis (strain McKiel).